We begin with the raw amino-acid sequence, 100 residues long: Urease subunit gamma (100 aa).

The protein belongs to the urease gamma subunit family. In terms of assembly, heterotrimer of UreA (gamma), UreB (beta) and UreC (alpha) subunits. Three heterotrimers associate to form the active enzyme.

The protein localises to the cytoplasm. It catalyses the reaction urea + 2 H2O + H(+) = hydrogencarbonate + 2 NH4(+). The protein operates within nitrogen metabolism; urea degradation; CO(2) and NH(3) from urea (urease route): step 1/1. The sequence is that of Urease subunit gamma from Haemophilus influenzae (strain 86-028NP).